A 285-amino-acid chain; its full sequence is MTSYNFKTQTSFPLLLSISFFFLLLLNKVNSTGSLSFSFPKFAPNQPYLIFQRDALVTSTGVLQLTNVVNGVPSGKSLGRALYAAPFQIWDSTTGNVASFVTSFSFIIQAPNPTTTADGLAFFLAPVDTQPLDVGGMLGIFKDGYFNKSNQIVAVEFDTFSNIHFDPKGRHMGINVNSIVSIKTVPWNWTNGEVANVFISYEASTKSLTASLVYPSLETSFIVHAIVDVKDVLPEWVRFGFSATTGIDKGYVQTNDVLSWSFESNLPGGNSVASVKNAGLSTYAA.

The signal sequence occupies residues 1–31 (MTSYNFKTQTSFPLLLSISFFFLLLLNKVNS). Asparagine 147 carries N-linked (GlcNAc...) asparagine glycosylation. Mn(2+) is bound by residues glutamate 156 and aspartate 158. Residues aspartate 158, phenylalanine 160, asparagine 162, and aspartate 166 each coordinate Ca(2+). Residues aspartate 166 and histidine 171 each coordinate Mn(2+). N-linked (GlcNAc...) asparagine glycosylation occurs at asparagine 188.

This sequence belongs to the leguminous lectin family. RPbAI is composed of two polypeptides, A and B, that associate into five different tetrameric isolectins. The A4 combination is the only one devoid of agglutination activity. Isoform B4 displays maximal agglutination activity. In terms of tissue distribution, strong expression in seed. Lower levels in the flower, and the bark of the roots. No expression in leaf. The lectin accumulates in the inner bark in autumn.

Its function is as follows. N-acetyl-D-galactosamine specific lectin. Bark lectins are storage protein that probably maintains stocks of nitrogen during dormant period. Self-aggregatable molecules that can bind their own carbohydrate side chains. They could also play a role in the plant's defense against phytophagous invertebrates or herbivorous higher animals. This Robinia pseudoacacia (Black locust) protein is Bark agglutinin I polypeptide A.